The sequence spans 294 residues: MIEVLTTDSQKLLHQLNTLLEQESRCQPKVCGLKLIESAHDNGLRMTARLRDFEVKDLLSLTQFFGFDTETFSLAVNLLDRFLSKMKVQAKHLGCVGLSCFYLAVKATEEERNVPLATDLIRISQYRFTVSDLMRMEKIVLEKVCWKVKATTAFQFLQLYYSLVHDTLPFERRNDLNFERLEAQLKACHCRIIFSKAKPSVLALSILALEIQALKYVELTEGVECIQKHSKISGRDLTFWQELVSKCLTEYSSNKCSKPNGQKLKWIVSGRTARQLKHSYYRITHLPTIPETIC.

It belongs to the cyclin family. Cyclin G subfamily. In terms of assembly, binds to B' regulatory B subunits of protein phosphatase A (PP2A) following induction by p53 (in vitro). In terms of tissue distribution, highest levels in kidney, heart and skeletal muscle.

The protein resides in the nucleus. May play a role in growth regulation. Is associated with G2/M phase arrest in response to DNA damage. May be an intermediate by which p53 mediates its role as an inhibitor of cellular proliferation. The chain is Cyclin-G1 (Ccng1) from Mus musculus (Mouse).